The chain runs to 382 residues: Saccharopine dehydrogenase [NAD(+), L-lysine-forming] (382 aa).

L-saccharopine-binding residues include R20 and K79. K79 serves as the catalytic Proton acceptor. H98 acts as the Proton donor in catalysis. Q103 is a binding site for L-saccharopine. R132 lines the NAD(+) pocket. L-saccharopine contacts are provided by R133 and F137. NAD(+)-binding positions include G215–R216, D239, T243, Y263, and V290. C217 and C261 form a disulfide bridge. An L-saccharopine-binding site is contributed by S291–D293. I330–L333 provides a ligand contact to NAD(+).

Belongs to the AlaDH/PNT family. Monomer.

It carries out the reaction L-saccharopine + NAD(+) + H2O = L-lysine + 2-oxoglutarate + NADH + H(+). It participates in amino-acid biosynthesis; L-lysine biosynthesis via AAA pathway; L-lysine from L-alpha-aminoadipate (fungal route): step 3/3. In terms of biological role, catalyzes the NAD(+)-dependent cleavage of saccharopine to L-lysine and 2-oxoglutarate, the final step in the alpha-aminoadipate (AAA) pathway for lysin biosynthesis. The chain is Saccharopine dehydrogenase [NAD(+), L-lysine-forming] from Candida albicans (strain SC5314 / ATCC MYA-2876) (Yeast).